A 274-amino-acid polypeptide reads, in one-letter code: tRNA-cytidine(32) 2-sulfurtransferase (274 aa).

The short motif at 40–45 (SGGKDS) is the PP-loop motif element. [4Fe-4S] cluster-binding residues include cysteine 115, cysteine 118, and cysteine 206.

The protein belongs to the TtcA family. Homodimer. Requires Mg(2+) as cofactor. The cofactor is [4Fe-4S] cluster.

The protein localises to the cytoplasm. The catalysed reaction is cytidine(32) in tRNA + S-sulfanyl-L-cysteinyl-[cysteine desulfurase] + AH2 + ATP = 2-thiocytidine(32) in tRNA + L-cysteinyl-[cysteine desulfurase] + A + AMP + diphosphate + H(+). It functions in the pathway tRNA modification. In terms of biological role, catalyzes the ATP-dependent 2-thiolation of cytidine in position 32 of tRNA, to form 2-thiocytidine (s(2)C32). The sulfur atoms are provided by the cysteine/cysteine desulfurase (IscS) system. This Ectopseudomonas mendocina (strain ymp) (Pseudomonas mendocina) protein is tRNA-cytidine(32) 2-sulfurtransferase.